Consider the following 691-residue polypeptide: DNA ligase (691 aa).

NAD(+) is bound by residues 41–45 (DAEYD), 90–91 (SL), and glutamate 130. Lysine 132 functions as the N6-AMP-lysine intermediate in the catalytic mechanism. Residues arginine 153, glutamate 190, lysine 307, and lysine 331 each contribute to the NAD(+) site. Zn(2+) contacts are provided by cysteine 425, cysteine 428, cysteine 443, and cysteine 449. One can recognise a BRCT domain in the interval 610–691 (APQGVLAGKT…MHTLLEGHAR (82 aa)).

Belongs to the NAD-dependent DNA ligase family. LigA subfamily. The cofactor is Mg(2+). Mn(2+) is required as a cofactor.

It carries out the reaction NAD(+) + (deoxyribonucleotide)n-3'-hydroxyl + 5'-phospho-(deoxyribonucleotide)m = (deoxyribonucleotide)n+m + AMP + beta-nicotinamide D-nucleotide.. In terms of biological role, DNA ligase that catalyzes the formation of phosphodiester linkages between 5'-phosphoryl and 3'-hydroxyl groups in double-stranded DNA using NAD as a coenzyme and as the energy source for the reaction. It is essential for DNA replication and repair of damaged DNA. The polypeptide is DNA ligase (Burkholderia pseudomallei (strain 1710b)).